The primary structure comprises 476 residues: Aspartyl/glutamyl-tRNA(Asn/Gln) amidotransferase subunit B (476 aa).

Belongs to the GatB/GatE family. GatB subfamily. As to quaternary structure, heterotrimer of A, B and C subunits.

It carries out the reaction L-glutamyl-tRNA(Gln) + L-glutamine + ATP + H2O = L-glutaminyl-tRNA(Gln) + L-glutamate + ADP + phosphate + H(+). It catalyses the reaction L-aspartyl-tRNA(Asn) + L-glutamine + ATP + H2O = L-asparaginyl-tRNA(Asn) + L-glutamate + ADP + phosphate + 2 H(+). Allows the formation of correctly charged Asn-tRNA(Asn) or Gln-tRNA(Gln) through the transamidation of misacylated Asp-tRNA(Asn) or Glu-tRNA(Gln) in organisms which lack either or both of asparaginyl-tRNA or glutaminyl-tRNA synthetases. The reaction takes place in the presence of glutamine and ATP through an activated phospho-Asp-tRNA(Asn) or phospho-Glu-tRNA(Gln). This Thermosipho melanesiensis (strain DSM 12029 / CIP 104789 / BI429) protein is Aspartyl/glutamyl-tRNA(Asn/Gln) amidotransferase subunit B.